We begin with the raw amino-acid sequence, 122 residues long: Nuclear transport factor 2A (122 aa).

Met1 is subject to N-acetylmethionine. The NTF2 domain occupies 6–119; the sequence is VAKAFVEHYY…YYVFNDIFRL (114 aa).

In terms of assembly, interacts with RAN1. As to expression, expressed in roots, stems, leaves and flowers, and, at low levels, in siliques.

It localises to the cytoplasm. The protein localises to the nucleus. The protein resides in the nucleus envelope. In terms of biological role, facilitates protein transport into the nucleus. Interacts with various nucleoporins and with Ran-GDP. Could be part of a multicomponent system of cytosolic factors that assemble at the pore complex during nuclear import. The sequence is that of Nuclear transport factor 2A from Arabidopsis thaliana (Mouse-ear cress).